We begin with the raw amino-acid sequence, 536 residues long: Thiamine transport system permease protein ThiP (536 aa).

Transmembrane regions (helical) follow at residues 16–36 (GLCA…ALWL), 58–78 (FSFW…VFLA), 95–115 (LCAM…LSVY), 134–154 (FSPY…LPMA), 199–219 (VAAL…SLGG), 240–260 (PARA…LVLL), 291–311 (DALL…AVVV), 334–354 (SLRI…MLLW), 373–393 (LSGM…FFLL), 404–424 (ADGI…LKVL), 463–483 (AQAL…VALF), and 506–526 (DGAV…TLIE). An ABC transmembrane type-1 1 domain is found at 56–261 (VRFSFWQAFL…VCCLALVLLS (206 aa)). In terms of domain architecture, ABC transmembrane type-1 2 spans 331-525 (VWTSLRIALA…LLCFTLFTLI (195 aa)).

It belongs to the binding-protein-dependent transport system permease family. The complex is composed of two ATP-binding proteins (ThiQ), two transmembrane proteins (ThiP) and a solute-binding protein (ThiB).

The protein localises to the cell inner membrane. Part of the ABC transporter complex ThiBPQ involved in thiamine import. Probably responsible for the translocation of the substrate across the membrane. Is also involved in thiamine pyrophosphate transport. The protein is Thiamine transport system permease protein ThiP of Salmonella typhimurium (strain LT2 / SGSC1412 / ATCC 700720).